Consider the following 354-residue polypeptide: Probable glucan endo-1,3-beta-glucosidase BG5 (354 aa).

Positions 1–30 are cleaved as a signal peptide; sequence MLYLPKKLFLFFFSCIVVIVNYNNSDFVNA. The active-site Proton donor is E137. The Nucleophile role is filled by E276. N286 is a glycosylation site (N-linked (GlcNAc...) asparagine).

The protein belongs to the glycosyl hydrolase 17 family.

It localises to the secreted. It catalyses the reaction Hydrolysis of (1-&gt;3)-beta-D-glucosidic linkages in (1-&gt;3)-beta-D-glucans.. In terms of biological role, may play a role in plant defense against pathogens. The polypeptide is Probable glucan endo-1,3-beta-glucosidase BG5 (Arabidopsis thaliana (Mouse-ear cress)).